We begin with the raw amino-acid sequence, 283 residues long: Protein boule-like (283 aa).

The tract at residues 1–25 (MQTDSLSPSPNPVSPVPLNNPTSAP) is disordered. In terms of domain architecture, RRM spans 33 to 110 (NRIFVGGIDF…KKLNIGPAIR (78 aa)). The region spanning 160–184 (PSRSVCSSPVMVAQPIYQQPAYHYQ) is the DAZ domain.

It belongs to the RRM DAZ family. In terms of assembly, interacts with DAZ1 and DAZL. In terms of tissue distribution, testis specific. Not expressed in early embryos, primordial germ cells and spermatogonial cells. First expressed in the cytoplasm of spermatocytes and then persists through meiosis.

The protein resides in the cytoplasm. In terms of biological role, probable RNA-binding protein, which may be required during spermatogenesis. May act by binding to the 3'-UTR of mRNAs and regulating their translation. The chain is Protein boule-like (BOLL) from Homo sapiens (Human).